The following is a 322-amino-acid chain: ATP-dependent 6-phosphofructokinase (322 aa).

Position 12 (Gly-12) interacts with ATP. 22–26 is a binding site for ADP; sequence RATAK. ATP contacts are provided by residues 73–74 and 103–106; these read RS and GDGS. A Mg(2+)-binding site is contributed by Asp-104. Substrate is bound at residue 127–129; that stretch reads TID. Asp-129 (proton acceptor) is an active-site residue. Residue Arg-156 participates in ADP binding. Substrate-binding positions include Arg-164 and 171–173; that span reads MGR. Residues 187 to 189 and 215 to 217 each bind ADP; these read GGD and KLH. Substrate-binding positions include Glu-224, Arg-245, and 251 to 254; that span reads HIQR.

This sequence belongs to the phosphofructokinase type A (PFKA) family. ATP-dependent PFK group I subfamily. Prokaryotic clade 'B1' sub-subfamily. In terms of assembly, homotetramer. Mg(2+) serves as cofactor.

The protein resides in the cytoplasm. The catalysed reaction is beta-D-fructose 6-phosphate + ATP = beta-D-fructose 1,6-bisphosphate + ADP + H(+). Its pathway is carbohydrate degradation; glycolysis; D-glyceraldehyde 3-phosphate and glycerone phosphate from D-glucose: step 3/4. Its activity is regulated as follows. Allosterically activated by ADP and other diphosphonucleosides, and allosterically inhibited by phosphoenolpyruvate. Catalyzes the phosphorylation of D-fructose 6-phosphate to fructose 1,6-bisphosphate by ATP, the first committing step of glycolysis. In Fusobacterium nucleatum subsp. nucleatum (strain ATCC 25586 / DSM 15643 / BCRC 10681 / CIP 101130 / JCM 8532 / KCTC 2640 / LMG 13131 / VPI 4355), this protein is ATP-dependent 6-phosphofructokinase.